The sequence spans 1891 residues: TATA-binding protein-associated factor mot1 (1891 aa).

The stretch at 30-68 (PDELFNLLGRILPYLRSKSWDTRAAAAKAIGLIVANADT) is one HEAT 1 repeat. 3 disordered regions span residues 184–216 (FVASREHSIQGTSQPLASPIEPANGEESGLSKR), 241–283 (LSSR…LDRS), and 295–316 (FKGASVPENPLLQPESTEEGPN). The span at 264 to 275 (ENGEERNGDSKP) shows a compositional bias: basic and acidic residues. HEAT repeat units follow at residues 473–511 (SKLMDGVLEAVMKGLGDYDDDVRAVSAATLVPIAEEFVK) and 569–606 (SSFGKLVPRLYPFLRHTITSVRSAVLRALMTFLQLEGE). Low complexity predominate over residues 699-710 (SAAAPARSSPAS). Positions 699 to 740 (SAAAPARSSPASNTPEGTKGRRRKSEKKEAPPPSAHNVDGHM) are disordered. HEAT repeat units lie at residues 957–996 (PKKPSHIIKGMMDSIKKEENAELQQRSATAITSLVEYYTT), 1139–1177 (YPWVVDLLPLVVKALQCKLSVIRYAAAKCFATICSVITV), 1181–1216 (TMLVEKVLPMINDALDVHHRQGAVECIYHLIHVMED), and 1219–1257 (LPYVIFLVVPVLGRMSDSDNEVRLLATTSFATLVKLVPL). The Helicase ATP-binding domain occupies 1316 to 1489 (AFLNRYNLHG…WSLFDFLMPG (174 aa)). Residue 1329–1336 (DDMGLGKT) coordinates ATP. A DEAH box motif is present at residues 1440 to 1443 (DEGH). The stretch at 1526-1565 (EALHKQVLPFLLRRLKEEVLNDLPPKIIQNYYCDPSELQR) is one HEAT 8 repeat. One can recognise a Helicase C-terminal domain in the interval 1663–1813 (DLSGASYVSP…STVVNQQNAG (151 aa)).

It belongs to the SNF2/RAD54 helicase family. In terms of assembly, forms the NCT transcriptional regulatory complex with nctA and nctB.

The protein resides in the nucleus. Its function is as follows. Regulates transcription in association with TATA binding protein (TBP). Removes TBP from the TATA box via its C-terminal ATPase activity. Both transcription activation and repression require its ATPase activity. Part of the NCT transcriptional regulatory complex that acts as a key regulator of ergosterol biosynthesis and the azole exporter cdr1B. The NCT complex binds the promoters of genes linked to azole susceptibility, and especially represses the expression of cdr1B transporter. The protein is TATA-binding protein-associated factor mot1 of Aspergillus fumigatus (strain CBS 144.89 / FGSC A1163 / CEA10) (Neosartorya fumigata).